The primary structure comprises 351 residues: Tryptophan--tRNA ligase (351 aa).

ATP is bound by residues 11–13 (RPT) and 19–20 (GH). A 'HIGH' region motif is present at residues 12–20 (PTGALHLGH). Residue Asp139 coordinates L-tryptophan. Residues 151-153 (GRD), Leu190, and 198-202 (KMSKS) contribute to the ATP site. Positions 198-202 (KMSKS) match the 'KMSKS' region motif.

The protein belongs to the class-I aminoacyl-tRNA synthetase family. In terms of assembly, homodimer.

The protein resides in the cytoplasm. The catalysed reaction is tRNA(Trp) + L-tryptophan + ATP = L-tryptophyl-tRNA(Trp) + AMP + diphosphate + H(+). In terms of biological role, catalyzes the attachment of tryptophan to tRNA(Trp). This chain is Tryptophan--tRNA ligase, found in Borreliella burgdorferi (strain ATCC 35210 / DSM 4680 / CIP 102532 / B31) (Borrelia burgdorferi).